Reading from the N-terminus, the 270-residue chain is Phosphatidylglycerol--prolipoprotein diacylglyceryl transferase (270 aa).

4 helical membrane-spanning segments follow: residues 19–39 (FPVY…LWLA), 56–76 (LVLI…VIFE), 92–112 (QGGL…ILFA), and 116–136 (GVSF…GQAI). R138 contacts a 1,2-diacyl-sn-glycero-3-phospho-(1'-sn-glycerol). Helical transmembrane passes span 178 to 198 (HPTF…LLAL), 206 to 226 (GELF…VEGL), and 236 to 256 (LRIA…FIIV).

Belongs to the Lgt family.

It is found in the cell membrane. The catalysed reaction is L-cysteinyl-[prolipoprotein] + a 1,2-diacyl-sn-glycero-3-phospho-(1'-sn-glycerol) = an S-1,2-diacyl-sn-glyceryl-L-cysteinyl-[prolipoprotein] + sn-glycerol 1-phosphate + H(+). The protein operates within protein modification; lipoprotein biosynthesis (diacylglyceryl transfer). Catalyzes the transfer of the diacylglyceryl group from phosphatidylglycerol to the sulfhydryl group of the N-terminal cysteine of a prolipoprotein, the first step in the formation of mature lipoproteins. The chain is Phosphatidylglycerol--prolipoprotein diacylglyceryl transferase from Bacillus cereus (strain Q1).